Consider the following 286-residue polypeptide: MCTMPLMKLKKMMRRTAFLLSVLIGCSMLGSDRSDKAPHWELVWSDEFDYSGLPDPEKWDYDVGGHGWGNQELQYYTRARIENARVGGGVLIIEARHEPYEGREYTSARLVTRGKASWTYGRFEIRARLPSGRGTWPAIWMLPDRQTYGSAYWPDNGEIDIMEHVGFNPDVVHGTVHTKAYNHLLGTQRGGSIRVPTARTDFHVYAIEWTPEEIRWFVDDSLYYRFPNERLTDPEADWRHWPFDQPFHLIMNIAVGGAWGGQQGVDPEAFPAQLVVDYVRVYRWVE.

The N-terminal stretch at 1–30 is a signal peptide; it reads MCTMPLMKLKKMMRRTAFLLSVLIGCSMLG. The GH16 domain occupies 48–286; that stretch reads FDYSGLPDPE…DYVRVYRWVE (239 aa). Glutamate 158 serves as the catalytic Nucleophile. Glutamate 163 functions as the Proton donor in the catalytic mechanism.

This sequence belongs to the glycosyl hydrolase 16 family.

The enzyme catalyses Hydrolysis of (1-&gt;4)-beta-D-glucosidic linkages in beta-D-glucans containing (1-&gt;3)- and (1-&gt;4)-bonds.. In terms of biological role, shows activity on lichenan, beta-glucan and laminarin but not on CMC cellulose or xylan. The polypeptide is Beta-glucanase (bglA) (Rhodothermus marinus (Rhodothermus obamensis)).